Consider the following 862-residue polypeptide: MNIQEQGFPLDLGASFTEDAPRPPVPGEEGELVSTDPRPASYSFCSGKGVGIKGETSTATPRRSDLDLGYEPEGSASPTPPYLKWAESLHSLLDDQDGISLFRTFLKQEGCADLLDFWFACTGFRKLEPCDSNEEKRLKLARAIYRKYILDNNGIVSRQTKPATKSFIKGCIMKQLIDPAMFDQAQTEIQATMEENTYPSFLKSDIYLEYTRTGSESPKVCSDQSSGSGTGKGISGYLPTLNEDEEWKCDQDMDEDDGRDAAPPGRLPQKLLLETAAPRVSSSRRYSEGREFRYGSWREPVNPYYVNAGYALAPATSANDSEQQSLSSDADTLSLTDSSVDGIPPYRIRKQHRREMQESVQVNGRVPLPHIPRTYRVPKEVRVEPQKFAEELIHRLEAVQRTREAEEKLEERLKRVRMEEEGEDGDPSSGPPGPCHKLPPAPAWHHFPPRCVDMGCAGLRDAHEENPESILDEHVQRVLRTPGRQSPGPGHRSPDSGHVAKMPVALGGAASGHGKHVPKSGAKLDAAGLHHHRHVHHHVHHSTARPKEQVEAEATRRAQSSFAWGLEPHSHGARSRGYSESVGAAPNASDGLAHSGKVGVACKRNAKKAESGKSASTEVPGASEDAEKNQKIMQWIIEGEKEISRHRRTGHGSSGTRKPQPHENSRPLSLEHPWAGPQLRTSVQPSHLFIQDPTMPPHPAPNPLTQLEEARRRLEEEEKRASRAPSKQRYVQEVMRRGRACVRPACAPVLHVVPAVSDMELSETETRSQRKVGGGSAQPCDSIVVAYYFCGEPIPYRTLVRGRAVTLGQFKELLTKKGSYRYYFKKVSDEFDCGVVFEEVREDEAVLPVFEEKIIGKVEKVD.

Residues 1 to 78 form a disordered region; sequence MNIQEQGFPL…GYEPEGSASP (78 aa). A Tankyrase-binding motif motif is present at residues 20–29; it reads APRPPVPGEE. Residues S75 and S77 each carry the phosphoserine; by CK1 modification. The region spanning 88-211 is the RGS domain; sequence SLHSLLDDQD…LKSDIYLEYT (124 aa). The tract at residues 209–338 is interaction with TP53; that stretch reads EYTRTGSESP…DADTLSLTDS (130 aa). 2 disordered regions span residues 215 to 289 and 316 to 344; these read SESP…YSEG and TSAN…DGIP. The residue at position 217 (S217) is a Phosphoserine; by CK1. Over residues 242 to 258 the composition is skewed to acidic residues; that stretch reads NEDEEWKCDQDMDEDDG. Over residues 325 to 339 the composition is skewed to low complexity; sequence SLSSDADTLSLTDSS. The interval 348–433 is interaction with GSK3B; that stretch reads IRKQHRREMQ…DGDPSSGPPG (86 aa). The segment at 353 to 411 is interaction with SIAH1 and SIAH2; it reads RREMQESVQVNGRVPLPHIPRTYRVPKEVRVEPQKFAEELIHRLEAVQRTREAEEKLEE. Positions 413 to 441 are disordered; sequence LKRVRMEEEGEDGDPSSGPPGPCHKLPPA. Pro residues predominate over residues 429 to 441; it reads SGPPGPCHKLPPA. Residues 434–502 form an interaction with CTNNB1 region; that stretch reads PCHKLPPAPA…SPDSGHVAKM (69 aa). S469 bears the Phosphoserine; by CK1 mark. Positions 480-500 are disordered; sequence RTPGRQSPGPGHRSPDSGHVA. T481 bears the Phosphothreonine; by GSK3-beta mark. Phosphoserine occurs at positions 486, 493, and 511. Residues 507–757 form an interaction with RNF111 region; that stretch reads GGAASGHGKH…PVLHVVPAVS (251 aa). Positions 531 to 544 are enriched in basic residues; that stretch reads HHRHVHHHVHHSTA. Disordered stretches follow at residues 531–629 and 641–679; these read HHRH…AEKN and KEIS…GPQL. Residues 545–556 are compositionally biased toward basic and acidic residues; that stretch reads RPKEQVEAEATR. Positions 575–789 are interaction with PPP2CA; the sequence is SRGYSESVGA…CDSIVVAYYF (215 aa). Phosphoserine is present on S581. The interval 677–752 is interaction with HIPK2; the sequence is PQLRTSVQPS…RPACAPVLHV (76 aa). A DIX domain is found at 780-862; that stretch reads CDSIVVAYYF…KIIGKVEKVD (83 aa). Residues K857 and K860 each participate in a glycyl lysine isopeptide (Lys-Gly) (interchain with G-Cter in SUMO) cross-link.

Homodimer. Interacts with ZBED3; the interaction is direct, enhanced by protein kinase GSK3B and casein kinase CSNK1E activities and decreases GSK3B-induced beta-catenin serine and threonine phosphorylations. Component of the beta-catenin destruction complex, containing at least, CTNNB1, an axin and GSK3B, that regulates CTNNB1 protein levels through phosphorylation and ubiquitination. Interacts with CTNNB1 (via the armadillo repeats 2-7). Interacts with GSK3B; the interaction hyperphosphorylates CTNNB1 leading to its ubiquitination and destruction. Component of the AXIN1-HIPK2-TP53 complex. Interacts directly in the complex with TP53 and HIPK2. Interacts with DAXX; the interaction stimulates the interaction of DAXX with TP53, stimulates 'Ser-46' phosphorylation of TP53 and induces cell death on UV irradiation. Also binds APC, SMAD6, SMAD7 and RNF111. Interacts with DIXDC1; prevents interaction with MAP3K1. Interacts with MAP3K4. Interacts with ANKRD6 and AIDA. Interacts with MDFI; the interaction decreases AXIN1-mediated JUN N-terminal kinase (JNK) activation. Interacts with MDFIC; the interaction inhibits beta-cateninin-mediated signaling and AXIN1-mediated JUN N-terminal kinase (JNK) activation. Interacts with LRP5 (via its phosphorylated PPPSP motifs); the interaction is stimulated by WNT1 and GSK3B and activates beta-catenin signaling. Interacts (via the C-terminal) with PPP1CA; the interaction dephosphorylates AXIN1 and regulates interaction with GSK3B. Interacts with PPP2CA; the interaction dephosphorylates AXIN1. Interacts with MACF1. Found in a complex composed of MACF1, APC, AXIN1, CTNNB1 and GSK3B. Interacts with TNKS. Interacts with DAB2; the interaction is mutually exclusive with the AXIN1:PPP1CA interaction. Interacts with WDR26. Interacts with GID8. Interacts with SIAH1 and SIAH2; both probably catalyze AXIN1 ubiquitination and subsequent proteasome-mediated ubiquitin-dependent degradation. Interaction with GSK3B and AXIN1 is competitive. In terms of processing, phosphorylation and dephosphorylation of AXIN1 regulates assembly and function of the beta-catenin complex. Phosphorylated by CK1 and GSK3B. Dephosphorylated by PPP1CA and PPP2CA. Phosphorylation by CK1 enhances binding of GSK3B to AXIN1. Post-translationally, ADP-ribosylated by tankyrase TNKS and TNKS2. Poly-ADP-ribosylated protein is recognized by RNF146, followed by ubiquitination at 'Lys-48' and subsequent activation of the Wnt signaling pathway. Ubiquitinated by RNF146 when poly-ADP-ribosylated, leading to its degradation and subsequent activation of the Wnt signaling pathway. Sumoylation at Lys-857 and Lys-860 prevents ubiquitination and degradation. Sumoylation is required for AXIN1-mediated JNK activation. Deubiquitinated by USP34, deubiquitinated downstream of beta-catenin stabilization step: deubiquitination is important for nuclear accumulation during Wnt signaling to positively regulate beta-catenin (CTNBB1)-mediated transcription. Ubiquitination by SIAH1 and SIAH2 induces its proteasomal degradation as part of the activation of the Wnt signaling pathway. Ubiquitously expressed.

Its subcellular location is the cytoplasm. It localises to the nucleus. It is found in the membrane. The protein resides in the cell membrane. Component of the beta-catenin destruction complex required for regulating CTNNB1 levels through phosphorylation and ubiquitination, and modulating Wnt-signaling. Controls dorsoventral patterning via two opposing effects; down-regulates CTNNB1 to inhibit the Wnt signaling pathway and ventralize embryos, but also dorsalizes embryos by activating a Wnt-independent JNK signaling pathway. In Wnt signaling, probably facilitates the phosphorylation of CTNNB1 and APC by GSK3B. Likely to function as a tumor suppressor. Enhances TGF-beta signaling by recruiting the RNF111 E3 ubiquitin ligase and promoting the degradation of inhibitory SMAD7. Also a component of the AXIN1-HIPK2-TP53 complex which controls cell growth, apoptosis and development. Facilitates the phosphorylation of TP53 by HIPK2 upon ultraviolet irradiation. This is Axin-1 (AXIN1) from Homo sapiens (Human).